The following is a 276-amino-acid chain: HUWE1-associated protein modifying stress responses 2 (276 aa).

Disordered regions lie at residues 146–182 (GKVPPTPQPPRTPRMSPRPPAAASTQAAATESGTPVG), 204–238 (ISMRSGPPGSSSQDGGIASSGRWKSSFLENDPNSL), and 252–276 (VRKRTSAQFGDGSADSPLHKRNRMV). Residues 149–165 (PPTPQPPRTPRMSPRPP) show a composition bias toward pro residues. 2 stretches are compositionally biased toward low complexity: residues 166 to 179 (AAASTQAAATESGT) and 208 to 219 (SGPPGSSSQDGG). The interval 252-276 (VRKRTSAQFGDGSADSPLHKRNRMV) is nuclear localization signal.

The protein belongs to the HAPSTR1 family. Homooligomer. Heterooligomer with HAPSTR1; the interaction is direct and stabilizes HAPSTR1 independently of HUWE1. Interacts with HUWE1.

Its subcellular location is the nucleus. Together with HAPSTR1 plays a central regulatory role in the cellular response to molecular stressors, such as DNA damage, nutrient scarcity, and protein misfolding. Regulates these multiple stress response signaling pathways by stabilizing HAPSTR1, but also independently of HAPSTR1. This Mus musculus (Mouse) protein is HUWE1-associated protein modifying stress responses 2.